Consider the following 211-residue polypeptide: Arginine exporter protein ArgO (211 aa).

6 helical membrane-spanning segments follow: residues 1-21 (MISYYFQGFALGAAMILPLGP), 37-57 (LMIALLCALSDLVLISAGIFG), 68-88 (LLALVTWGGVAFLLWYGFGAL), 111-131 (IIATMLAVTWLNPHVYLDTFV), 147-167 (WFALGTISASFLWFFGLALLA), and 179-199 (AQRIINILVGVVMWLIAFQLA).

This sequence belongs to the LysE/ArgO transporter (TC 2.A.75) family.

It localises to the cell inner membrane. The enzyme catalyses L-arginine(in) = L-arginine(out). Its function is as follows. Involved in the export of arginine. Important to control the intracellular level of arginine and the correct balance between arginine and lysine. The sequence is that of Arginine exporter protein ArgO from Salmonella newport (strain SL254).